A 1370-amino-acid polypeptide reads, in one-letter code: Zinc finger MYM-type protein 3 (1370 aa).

Composition is skewed to low complexity over residues 1 to 12 (MDPSDFPSPFDP), 40 to 56 (APSRGWAPPGPSPSSGA), and 130 to 146 (GAGASPPSPEGLLEPLA). Disordered regions lie at residues 1-73 (MDPS…PGGV) and 85-310 (GLLY…MGTK). Basic and acidic residues predominate over residues 227–255 (TGKEIEKPPERVQKRSERVRRAEPPKPEV). A phosphoserine mark is found at Ser265 and Ser269. Acidic residues predominate over residues 265-281 (SDEDSDAMVDDPNDEDF). Residues Lys310, Lys322, and Lys330 each participate in a glycyl lysine isopeptide (Lys-Gly) (interchain with G-Cter in SUMO2) cross-link. 9 MYM-type zinc fingers span residues 334 to 368 (QLFCSSSCLTTYSKKPLGRKTCTFCKKEIWNTKDS), 380 to 424 (HEFC…LHEV), 431 to 466 (HRLCSDSCFSKFRANKGLKTNCCDQCGAYIYARPGG), 479 to 513 (KRFCNTTCLGAYKKKNTRVYPCVWCKTLCKNFEML), 523 to 561 (SLFCSLCCTTSYKVKQAGLTGPPRPCSFCRRSLSDPCYY), 569 to 606 (YQFCSPSCWTKFQHTSPEGGIHLSCHYCHSLFSGKPEV), 614 to 648 (FQFCCRDCCEDFKRLRGVVSQCEHCRQEKLLHEKL), 655 to 694 (KSFCSEGCVLLYKQDFTKKLGLCCITCTYCSQTCQRGVTE), and 701 to 735 (WDFCSEDCKTKYLLWYCKAARCHACKRQGKLLETI). A compositionally biased stretch (polar residues) spans 761-789 (NLDTQSGPESLLNSQSSESKPQTPSQTKV). Residues 761–831 (NLDTQSGPES…PPPPATPRKN (71 aa)) are disordered. Glycyl lysine isopeptide (Lys-Gly) (interchain with G-Cter in SUMO2) cross-links involve residues Lys780 and Lys788. Positions 790 to 799 (ENNHTVRTPD) are enriched in basic and acidic residues. Residue Thr797 is modified to Phosphothreonine. A Glycyl lysine isopeptide (Lys-Gly) (interchain with G-Cter in SUMO2) cross-link involves residue Lys806. Pro residues predominate over residues 816 to 827 (VPTPPPPPPPAT). A phosphothreonine mark is found at Thr818 and Thr827. Residues Lys848, Lys862, Lys921, and Lys1276 each participate in a glycyl lysine isopeptide (Lys-Gly) (interchain with G-Cter in SUMO2) cross-link.

May be a component of a BHC histone deacetylase complex that contains HDAC1, HDAC2, HMG20B/BRAF35, KDM1A, RCOR1/CoREST, PHF21A/BHC80, ZMYM2, ZNF217, ZMYM3, GSE1 and GTF2I. As to expression, ubiquitously expressed in all embryonic stages and adult tissues.

Its subcellular location is the nucleus. Its function is as follows. Plays a role in the regulation of cell morphology and cytoskeletal organization. The polypeptide is Zinc finger MYM-type protein 3 (Zmym3) (Mus musculus (Mouse)).